A 337-amino-acid chain; its full sequence is Pentalenene synthase (337 aa).

The Mg(2+) site is built by aspartate 80 and aspartate 84. The DDXXD motif signature appears at aspartate 80–aspartate 84. A disulfide bridge links cysteine 128 with cysteine 136. Mg(2+)-binding residues include asparagine 219, serine 223, and glutamate 227.

This sequence belongs to the terpene synthase family. As to quaternary structure, monomer. Requires Mg(2+) as cofactor.

The enzyme catalyses (2E,6E)-farnesyl diphosphate = pentalenene + diphosphate. It participates in sesquiterpene biosynthesis; pentalenene biosynthesis; pentalenene from farnesyl diphosphate: step 1/1. Its pathway is antibiotic biosynthesis; pentalenolactone biosynthesis. Functionally, catalyzes the cyclization of farnesyl diphosphate (FPP) to the tricyclic sesquiterpene pentalenene, which is the hydrocarbon precursor of the pentalenolactone family of antibiotics produced by a variety of Streptomyces species. This Streptomyces exfoliatus (Streptomyces hydrogenans) protein is Pentalenene synthase (penA).